The sequence spans 116 residues: Ribosome-binding factor A (116 aa).

The protein belongs to the RbfA family. As to quaternary structure, monomer. Binds 30S ribosomal subunits, but not 50S ribosomal subunits or 70S ribosomes.

The protein resides in the cytoplasm. One of several proteins that assist in the late maturation steps of the functional core of the 30S ribosomal subunit. Associates with free 30S ribosomal subunits (but not with 30S subunits that are part of 70S ribosomes or polysomes). Required for efficient processing of 16S rRNA. May interact with the 5'-terminal helix region of 16S rRNA. The protein is Ribosome-binding factor A of Chlorobium phaeobacteroides (strain BS1).